Reading from the N-terminus, the 310-residue chain is ADP-L-glycero-D-manno-heptose-6-epimerase (310 aa).

NADP(+) is bound by residues 10–11, 31–32, lysine 38, lysine 53, 75–79, and asparagine 92; these read FI, DN, and EGACS. Tyrosine 140 functions as the Proton acceptor in the catalytic mechanism. Residue lysine 144 coordinates NADP(+). Asparagine 169 provides a ligand contact to substrate. Residues valine 170 and lysine 178 each contribute to the NADP(+) site. Lysine 178 serves as the catalytic Proton acceptor. Residues serine 180, histidine 187, 201–204, arginine 209, and tyrosine 272 contribute to the substrate site; that span reads FEGS.

This sequence belongs to the NAD(P)-dependent epimerase/dehydratase family. HldD subfamily. In terms of assembly, homopentamer. Requires NADP(+) as cofactor.

It catalyses the reaction ADP-D-glycero-beta-D-manno-heptose = ADP-L-glycero-beta-D-manno-heptose. It participates in nucleotide-sugar biosynthesis; ADP-L-glycero-beta-D-manno-heptose biosynthesis; ADP-L-glycero-beta-D-manno-heptose from D-glycero-beta-D-manno-heptose 7-phosphate: step 4/4. Catalyzes the interconversion between ADP-D-glycero-beta-D-manno-heptose and ADP-L-glycero-beta-D-manno-heptose via an epimerization at carbon 6 of the heptose. The chain is ADP-L-glycero-D-manno-heptose-6-epimerase from Cronobacter sakazakii (strain ATCC BAA-894) (Enterobacter sakazakii).